The primary structure comprises 275 residues: Elongation factor Ts (275 aa).

Positions threonine 76–valine 79 are involved in Mg(2+) ion dislocation from EF-Tu.

This sequence belongs to the EF-Ts family.

The protein resides in the cytoplasm. In terms of biological role, associates with the EF-Tu.GDP complex and induces the exchange of GDP to GTP. It remains bound to the aminoacyl-tRNA.EF-Tu.GTP complex up to the GTP hydrolysis stage on the ribosome. The protein is Elongation factor Ts of Mycolicibacterium paratuberculosis (strain ATCC BAA-968 / K-10) (Mycobacterium paratuberculosis).